The following is a 268-amino-acid chain: Protein limb expression 1 homolog (268 aa).

It belongs to the LIX1 family. As to quaternary structure, interacts with ft (via intracellular domain) and ds (via intracellular domain).

Its subcellular location is the apical cell membrane. It is found in the cytoplasm. Its function is as follows. Component of the Fat (ft) signaling pathway that functions in normal development of various organs such as the wing and leg. In developing imaginal disks, involved in regulating both the protein levels and apical localization of ft and ds. Involved in establishing planar cell polarity (PCP) along the anterior-posterior axis of the wing (the early Fz signaling event), probably by acting upstream of ds and ft to regulate Fz activity. This is Protein limb expression 1 homolog from Drosophila melanogaster (Fruit fly).